A 703-amino-acid polypeptide reads, in one-letter code: 1,4-alpha-glucan-branching enzyme (703 aa).

(1,4-alpha-D-glucosyl)n contacts are provided by Trp-93 and Lys-130. The active-site Nucleophile is the Asp-355. The Proton donor role is filled by Glu-415.

Belongs to the glycosyl hydrolase 13 family. GlgB subfamily.

It is found in the cytoplasm. The enzyme catalyses Transfers a segment of a (1-&gt;4)-alpha-D-glucan chain to a primary hydroxy group in a similar glucan chain.. The protein operates within glycan biosynthesis; glycogen biosynthesis. Its function is as follows. Glycogen-branching enzyme participates in the glycogen biosynthetic process along with glycogenin and glycogen synthase. Generates alpha-1,6-glucosidic branches from alpha-1,4-linked glucose chains, to increase solubility of the glycogen polymer. The protein is 1,4-alpha-glucan-branching enzyme (GLC3) of Eremothecium gossypii (strain ATCC 10895 / CBS 109.51 / FGSC 9923 / NRRL Y-1056) (Yeast).